A 30-amino-acid chain; its full sequence is uncharacterized protein (30 aa).

This is an uncharacterized protein from Treponema pallidum (strain Nichols).